Here is a 475-residue protein sequence, read N- to C-terminus: MAAGRLRGLAVAGGGESSESDDDGWEIGYLDRASQKLKGVLPTEEKNETFKKALTTGDISLVQELLNSGISVDSSFRYGWTPLMYAASVSNVELVRVLLDRGANANFDKDKQTILITTCSSRGSEEQIVKCVELLLSRNADPNVPCRRLMTPIMYAARDGHPQVVALLVAHGAEVNTQDESGYTALTWAARQGHKNVVLKLLELGADKMLQTKDGNIPSEIAKRYKHLEIFSLLSLSLNPLKGKLQQQTKEETICKLLATDSDKEKDHIFSSYTAFGDLEVFLHGLGLEHMTDLLKERDITLRHLLTMRKDEFTKNGITSRDQQKILAALKELDVEEIKFGELPEVAKLEISGDEFLNFLLKLNKQCGHLITAVENIITELPVNSHKIVLEWASPQSFTSVCEELVSNVEDLSEEVCKLKDLIKKLQNERENDPTHMPLVEEVSTWNSRMLKRTAITVCGFGFLLFICKLTFLRK.

Positions 1–10 (MAAGRLRGLA) are enriched in low complexity. Residues 1-24 (MAAGRLRGLAVAGGGESSESDDDG) form a disordered region. A phosphoserine mark is found at serine 17, serine 18, and serine 20. ANK repeat units lie at residues 45–74 (EKNE…SVDS), 78–107 (YGWT…NANF), 110–144 (DKQT…DPNV), 148–177 (RLMT…EVNT), 181–210 (SGYT…DKML), and 214–243 (DGNI…PLKG). An SAM domain is found at 272–334 (SYTAFGDLEV…KILAALKELD (63 aa)).

In terms of assembly, interacts with DDX4, PIWIL1, RANBP9 and TDRD1.

The protein resides in the cytoplasm. Its function is as follows. Plays a central role during spermatogenesis by repressing transposable elements and preventing their mobilization, which is essential for the germline integrity. Acts via the piRNA metabolic process, which mediates the repression of transposable elements during meiosis by forming complexes composed of piRNAs and Piwi proteins and governs the methylation and subsequent repression of transposons. Its association with pi-bodies suggests a participation in the primary piRNAs metabolic process. Required prior to the pachytene stage to facilitate the production of multiple types of piRNAs, including those associated with repeats involved in the regulation of retrotransposons. May act by mediating protein-protein interactions during germ cell maturation. The polypeptide is Ankyrin repeat, SAM and basic leucine zipper domain-containing protein 1 (ASZ1) (Carollia perspicillata (Seba's short-tailed bat)).